The following is a 203-amino-acid chain: Urease accessory protein UreG (203 aa).

A GTP-binding site is contributed by 11-18 (GPVGSGKT).

This sequence belongs to the SIMIBI class G3E GTPase family. UreG subfamily. In terms of assembly, homodimer. UreD, UreF and UreG form a complex that acts as a GTP-hydrolysis-dependent molecular chaperone, activating the urease apoprotein by helping to assemble the nickel containing metallocenter of UreC. The UreE protein probably delivers the nickel.

It localises to the cytoplasm. Functionally, facilitates the functional incorporation of the urease nickel metallocenter. This process requires GTP hydrolysis, probably effectuated by UreG. The protein is Urease accessory protein UreG of Prochlorococcus marinus (strain MIT 9312).